The chain runs to 457 residues: SH3 domain-binding protein 5 (457 aa).

Residues 1-12 (MDTALKRSRSEE) show a composition bias toward basic and acidic residues. The segment at 1 to 68 (MDTALKRSRS…DDINRRETEL (68 aa)) is disordered. The segment covering 25-43 (EKEEEEERMEQGLEEEEEV) has biased composition (acidic residues). Residues 33-267 (MEQGLEEEEE…EIHERRRSNA (235 aa)) form a sufficient for interaction with RAB11A and for guanine nucleotide exchange activity region. The span at 44-53 (DPRIQGELEK) shows a compositional bias: basic and acidic residues. 4 coiled-coil regions span residues 46 to 92 (RIQG…LAKK), 99 to 147 (DSKP…RLLE), 156 to 202 (AWQE…LEKK), and 213 to 257 (YFEL…RISD). Residues 308-319 (NCGNLVSEDDSE) are compositionally biased toward acidic residues. The disordered stretch occupies residues 308 to 347 (NCGNLVSEDDSETQSVSSFSSGPTSPSEMPDQFPAVARPG). Residues 322-334 (SVSSFSSGPTSPS) show a composition bias toward low complexity. Phosphoserine; by MAPK12 and MAPK9 is present on Ser-353. Residues 371–427 (SECSGASSPECEVERGDRAEGAENKMSDKANNNRVLSSTSAGGGRSRSQSSTSLEGQ) form a disordered region. Residues Ser-377 and Ser-378 each carry the phosphoserine modification. Over residues 382–398 (EVERGDRAEGAENKMSD) the composition is skewed to basic and acidic residues. A compositionally biased stretch (low complexity) spans 406 to 427 (LSSTSAGGGRSRSQSSTSLEGQ). A Phosphoserine modification is found at Ser-420. Residue Ser-423 is modified to Phosphoserine; by MAPK12.

This sequence belongs to the SH3BP5 family. As to quaternary structure, interacts with BTK. Interacts with all isoforms of MAPK8, MAPK9, MAPK10 and MAPK12. Interacts with GDP-bound and nucleotide-free forms of RAB11A.

The protein resides in the cytoplasmic vesicle membrane. Its subcellular location is the mitochondrion. Functionally, functions as a guanine nucleotide exchange factor (GEF) with specificity for RAB11A and RAB25. Inhibits the auto- and transphosphorylation activity of BTK. Plays a negative regulatory role in BTK-related cytoplasmic signaling in B-cells. May be involved in BCR-induced apoptotic cell death. This is SH3 domain-binding protein 5 (Sh3bp5) from Rattus norvegicus (Rat).